The following is a 688-amino-acid chain: Glycine--tRNA ligase beta subunit (688 aa).

This sequence belongs to the class-II aminoacyl-tRNA synthetase family. In terms of assembly, tetramer of two alpha and two beta subunits.

The protein localises to the cytoplasm. It catalyses the reaction tRNA(Gly) + glycine + ATP = glycyl-tRNA(Gly) + AMP + diphosphate. This Syntrophomonas wolfei subsp. wolfei (strain DSM 2245B / Goettingen) protein is Glycine--tRNA ligase beta subunit.